Consider the following 367-residue polypeptide: FAD synthetase 2, chloroplastic (367 aa).

Residues 1 to 57 constitute a chloroplast transit peptide; the sequence is MLCGGSRVLQHLSDHNHHNSIGLGLGFCGAKIVQLSSFFLRPSQAMAKSHHFSRKLR.

The cofactor is Mg(2+).

The protein localises to the plastid. The protein resides in the chloroplast. It carries out the reaction FMN + ATP + H(+) = FAD + diphosphate. It participates in cofactor biosynthesis; FAD biosynthesis; FAD from FMN: step 1/1. Its function is as follows. Catalyzes the adenylation of flavin mononucleotide (FMN) to form flavin adenine dinucleotide (FAD) coenzyme. This is FAD synthetase 2, chloroplastic from Arabidopsis thaliana (Mouse-ear cress).